The following is a 305-amino-acid chain: Homoserine O-acetyltransferase (305 aa).

C142 functions as the Acyl-thioester intermediate in the catalytic mechanism. Substrate-binding residues include K163 and S192. H235 serves as the catalytic Proton acceptor. E237 is an active-site residue. R249 contacts substrate.

Belongs to the MetA family.

The protein localises to the cytoplasm. The enzyme catalyses L-homoserine + acetyl-CoA = O-acetyl-L-homoserine + CoA. It participates in amino-acid biosynthesis; L-methionine biosynthesis via de novo pathway; O-acetyl-L-homoserine from L-homoserine: step 1/1. Its function is as follows. Transfers an acetyl group from acetyl-CoA to L-homoserine, forming acetyl-L-homoserine. This chain is Homoserine O-acetyltransferase, found in Cereibacter sphaeroides (strain KD131 / KCTC 12085) (Rhodobacter sphaeroides).